A 137-amino-acid polypeptide reads, in one-letter code: Small ribosomal subunit protein uS9c (137 aa).

The protein belongs to the universal ribosomal protein uS9 family.

It localises to the plastid. The protein resides in the chloroplast. This is Small ribosomal subunit protein uS9c (rps9) from Mesostigma viride (Green alga).